A 488-amino-acid chain; its full sequence is Bifunctional protein NifU/MnmA (488 aa).

Residues 1 to 130 (MPERYGPRVI…DYWSRQGDAL (130 aa)) are nifU-like protein. Residues 143 to 488 (RRGVVAAMSG…GGGIIARRDA (346 aa)) form a tRNA-specific 2-thiouridylase MnmA region. Residues 149–156 (AMSGGVDS) and Phe-175 contribute to the ATP site. Catalysis depends on Cys-240, which acts as the Nucleophile. Residues Cys-240 and Cys-333 are joined by a disulfide bond. Residue Gly-264 coordinates ATP. An interaction with tRNA region spans residues 283 to 285 (KDQ). Cys-333 (cysteine persulfide intermediate) is an active-site residue. Positions 433–434 (RY) are interaction with tRNA.

In the N-terminal section; belongs to the NifU family. It in the C-terminal section; belongs to the MnmA/TRMU family.

The protein resides in the cytoplasm. It catalyses the reaction S-sulfanyl-L-cysteinyl-[protein] + uridine(34) in tRNA + AH2 + ATP = 2-thiouridine(34) in tRNA + L-cysteinyl-[protein] + A + AMP + diphosphate + H(+). In terms of biological role, may be involved in the formation or repair of [Fe-S] clusters present in iron-sulfur proteins. Catalyzes the 2-thiolation of uridine at the wobble position (U34) of tRNA, leading to the formation of s(2)U34. In Rubrobacter xylanophilus (strain DSM 9941 / JCM 11954 / NBRC 16129 / PRD-1), this protein is Bifunctional protein NifU/MnmA (nifU/mnmA).